A 471-amino-acid polypeptide reads, in one-letter code: Glutamate--tRNA ligase 1 (471 aa).

The 'HIGH' region signature appears at 10–20 (PSPTGFLHIGG). The segment at 113–140 (ARKEGRPPRYDGRWRDRDPSEAPKDRDP) is disordered. A 'KMSKS' region motif is present at residues 239–243 (KLSKR). K242 is a binding site for ATP.

Belongs to the class-I aminoacyl-tRNA synthetase family. Glutamate--tRNA ligase type 1 subfamily. As to quaternary structure, monomer.

The protein resides in the cytoplasm. It carries out the reaction tRNA(Glu) + L-glutamate + ATP = L-glutamyl-tRNA(Glu) + AMP + diphosphate. Its function is as follows. Catalyzes the attachment of glutamate to tRNA(Glu) in a two-step reaction: glutamate is first activated by ATP to form Glu-AMP and then transferred to the acceptor end of tRNA(Glu). This chain is Glutamate--tRNA ligase 1, found in Xanthobacter autotrophicus (strain ATCC BAA-1158 / Py2).